Reading from the N-terminus, the 112-residue chain is Ribonuclease P protein component (112 aa).

The protein belongs to the RnpA family. In terms of assembly, consists of a catalytic RNA component (M1 or rnpB) and a protein subunit.

It catalyses the reaction Endonucleolytic cleavage of RNA, removing 5'-extranucleotides from tRNA precursor.. Functionally, RNaseP catalyzes the removal of the 5'-leader sequence from pre-tRNA to produce the mature 5'-terminus. It can also cleave other RNA substrates such as 4.5S RNA. The protein component plays an auxiliary but essential role in vivo by binding to the 5'-leader sequence and broadening the substrate specificity of the ribozyme. This Mycoplasma mobile (strain ATCC 43663 / 163K / NCTC 11711) (Mesomycoplasma mobile) protein is Ribonuclease P protein component.